The chain runs to 371 residues: Probable palmitoyltransferase ZDHHC11B (371 aa).

Helical transmembrane passes span 43–63 (VVTWAVFVGLSLATFRIFIPL) and 70–90 (YIAYVVTGGIFSFHLVVHLIA). One can recognise a DHHC domain in the interval 125–175 (QFCHLCKVTVNKKTKHCISCNKCVSGFDHHCKWINNCVGSRNYWFFFSTVA). Cysteine 155 functions as the S-palmitoyl cysteine intermediate in the catalytic mechanism. Transmembrane regions (helical) follow at residues 177-197 (ATAGMLCLIAILLYVLVQYLV), 216-236 (TWLLFLPLFPVQVQTLIVVII), and 239-259 (LVLLLDLLGLVQLGQLLIFHI). The segment at 335–371 (DGDSKAQEADDAPSTSTLGLQQETTEPMKTDSAESED) is disordered. The span at 347-359 (PSTSTLGLQQETT) shows a compositional bias: polar residues. Residues 360–371 (EPMKTDSAESED) are compositionally biased toward basic and acidic residues.

This sequence belongs to the DHHC palmitoyltransferase family.

It localises to the membrane. It carries out the reaction L-cysteinyl-[protein] + hexadecanoyl-CoA = S-hexadecanoyl-L-cysteinyl-[protein] + CoA. Functionally, probable palmitoyltransferase that could catalyze the addition of palmitate onto various protein substrates and be involved in a variety of cellular processes. May play a role in cell proliferation. The chain is Probable palmitoyltransferase ZDHHC11B from Homo sapiens (Human).